A 348-amino-acid chain; its full sequence is Oxidase ucsJ (348 aa).

It belongs to the avfA family.

It participates in mycotoxin biosynthesis. Functionally, oxidase; part of the gene cluster that mediates the biosynthesis of UCS1025A, a member of the pyrrolizidinone family that acts as a strong telomerase inhibitor and displays potent antibacterial and antitumor properties. These compounds share a hemiaminal-containing pyrrolizidinone core fused with a gamma-lactone, giving a furopyrrolizidine that is connected to a decalin fragment. The polyketide synthase module (PKS) of the PKS-NRPS ucsA is responsible for the synthesis of the polyketide backbone via the condensation of an acetyl-CoA starter unit with 6 malonyl-CoA units. The downstream nonribosomal peptide synthetase (NRPS) module then amidates the carboxyl end of the polyketide with a 2S,3S-methylproline derived from L-isoleucine by the 2-oxoglutarate-dependent dioxygenase ucsF which converts L-isoleucine to (4S,5S)-4-methylpyrroline-5-carboxylate that is further converted to 2S,3S-methylproline by the pyrroline-5-carboxylate reductase ucsG. Reductive release of the completed aminoacyl polyketide from the assembly line can form the 3-pyrrolin-2-one structure via an intramolecular Knoevenagel reaction. Because ucsA lacks a designated enoylreductase (ER) domain, the required activity is provided the enoyl reductase ucsL. This keto acyclic precursor is the substrate of the Diels-Alderase ucsH, that catalyzes the Diels-Alder cycloaddition. Oxidation of the 3S-methyl group to a carboxylate by the cytochrome P450 monooxygenase ucsK allows an oxa-Michael cyclization that might involve the reductase/dehydrogenase ucsI and which furnishes the furopyrrolizidine. The oxidase ucsJ likely plays a critical role in stereoselective reduction of the C5-C6 double bond to afford the required R-configured carboxylate group. Further enolization and oxidation at C5 by an unidentified enzyme affords the last intermediate that can undergo oxa-Michael cyclization to yield UCS1025A. The polypeptide is Oxidase ucsJ (Acremonium sp).